Reading from the N-terminus, the 351-residue chain is Ion-translocating oxidoreductase complex subunit D (351 aa).

The next 3 helical transmembrane spans lie at 37–57, 88–108, and 123–143; these read YFFG…AILA, AIPP…AIVI, and PAMA…TTWL. Thr-187 is modified (FMN phosphoryl threonine). 4 consecutive transmembrane segments (helical) span residues 214 to 234, 241 to 261, 270 to 290, and 300 to 317; these read FAGL…LFLL, WHIP…FAVF, IFNL…TDPV, and LYYG…RSWG.

Belongs to the NqrB/RnfD family. As to quaternary structure, the complex is composed of six subunits: RnfA, RnfB, RnfC, RnfD, RnfE and RnfG. FMN serves as cofactor.

It localises to the cell inner membrane. Functionally, part of a membrane-bound complex that couples electron transfer with translocation of ions across the membrane. This chain is Ion-translocating oxidoreductase complex subunit D, found in Aliivibrio salmonicida (strain LFI1238) (Vibrio salmonicida (strain LFI1238)).